We begin with the raw amino-acid sequence, 234 residues long: 5'-methylthioadenosine/S-adenosylhomocysteine nucleosidase (234 aa).

The active-site Proton acceptor is the Glu12. Substrate-binding positions include Gly78, Ile152, and 173–174; that span reads ME. The active-site Proton donor is Asp197.

This sequence belongs to the PNP/UDP phosphorylase family. MtnN subfamily.

The enzyme catalyses S-adenosyl-L-homocysteine + H2O = S-(5-deoxy-D-ribos-5-yl)-L-homocysteine + adenine. The catalysed reaction is S-methyl-5'-thioadenosine + H2O = 5-(methylsulfanyl)-D-ribose + adenine. It carries out the reaction 5'-deoxyadenosine + H2O = 5-deoxy-D-ribose + adenine. The protein operates within amino-acid biosynthesis; L-methionine biosynthesis via salvage pathway; S-methyl-5-thio-alpha-D-ribose 1-phosphate from S-methyl-5'-thioadenosine (hydrolase route): step 1/2. Its function is as follows. Catalyzes the irreversible cleavage of the glycosidic bond in both 5'-methylthioadenosine (MTA) and S-adenosylhomocysteine (SAH/AdoHcy) to adenine and the corresponding thioribose, 5'-methylthioribose and S-ribosylhomocysteine, respectively. Also cleaves 5'-deoxyadenosine, a toxic by-product of radical S-adenosylmethionine (SAM) enzymes, into 5-deoxyribose and adenine. The polypeptide is 5'-methylthioadenosine/S-adenosylhomocysteine nucleosidase (Desulfotalea psychrophila (strain LSv54 / DSM 12343)).